A 251-amino-acid chain; its full sequence is PF03932 family protein CutC (251 aa).

It belongs to the CutC family.

It is found in the cytoplasm. The protein is PF03932 family protein CutC of Bacteroides fragilis (strain ATCC 25285 / DSM 2151 / CCUG 4856 / JCM 11019 / LMG 10263 / NCTC 9343 / Onslow / VPI 2553 / EN-2).